The following is a 247-amino-acid chain: Putative methyltransferase GWCH70_2453 (247 aa).

The protein belongs to the methyltransferase superfamily.

In terms of biological role, may be a S-adenosyl-L-methionine (SAM)-dependent methyltransferase. In Geobacillus sp. (strain WCH70), this protein is Putative methyltransferase GWCH70_2453.